Reading from the N-terminus, the 173-residue chain is S-ribosylhomocysteine lyase (173 aa).

Fe cation contacts are provided by histidine 54, histidine 58, and cysteine 128.

This sequence belongs to the LuxS family. As to quaternary structure, homodimer. Requires Fe cation as cofactor.

It carries out the reaction S-(5-deoxy-D-ribos-5-yl)-L-homocysteine = (S)-4,5-dihydroxypentane-2,3-dione + L-homocysteine. Functionally, involved in the synthesis of autoinducer 2 (AI-2) which is secreted by bacteria and is used to communicate both the cell density and the metabolic potential of the environment. The regulation of gene expression in response to changes in cell density is called quorum sensing. Catalyzes the transformation of S-ribosylhomocysteine (RHC) to homocysteine (HC) and 4,5-dihydroxy-2,3-pentadione (DPD). The polypeptide is S-ribosylhomocysteine lyase (Hydrogenovibrio crunogenus (strain DSM 25203 / XCL-2) (Thiomicrospira crunogena)).